The chain runs to 146 residues: Hemoglobin subunit beta-1 (146 aa).

One can recognise a Globin domain in the interval 2-146; sequence HWTAEEKALI…VAHALARRYH (145 aa). Histidine 92 is a heme b binding site.

It belongs to the globin family. Heterotetramer of two alpha chains and two beta chains. In terms of tissue distribution, red blood cells.

Its function is as follows. Involved in oxygen transport from the lung to the various peripheral tissues. This is Hemoglobin subunit beta-1 from Saara hardwickii (Indian spiny-tailed lizard).